The sequence spans 397 residues: Argininosuccinate synthase (397 aa).

Residue 8-16 (AYSGGLDTS) coordinates ATP. Positions 86 and 91 each coordinate L-citrulline. Residue glycine 116 participates in ATP binding. Threonine 118, asparagine 122, and aspartate 123 together coordinate L-aspartate. L-citrulline is bound at residue asparagine 122. Residues arginine 126, serine 175, serine 184, glutamate 260, and tyrosine 272 each coordinate L-citrulline.

It belongs to the argininosuccinate synthase family. Type 1 subfamily. Homotetramer.

The protein resides in the cytoplasm. It carries out the reaction L-citrulline + L-aspartate + ATP = 2-(N(omega)-L-arginino)succinate + AMP + diphosphate + H(+). The protein operates within amino-acid biosynthesis; L-arginine biosynthesis; L-arginine from L-ornithine and carbamoyl phosphate: step 2/3. The sequence is that of Argininosuccinate synthase from Clostridium botulinum (strain Kyoto / Type A2).